Consider the following 1213-residue polypeptide: DNA-directed RNA polymerase subunit beta (1213 aa).

The segment at 1153–1213 (RDMDEDSSEH…ADESDGKVSK (61 aa)) is disordered. A compositionally biased stretch (basic and acidic residues) spans 1171-1198 (MAEEQEKKKLAEETGKSENKEDSNETAD).

Belongs to the RNA polymerase beta chain family. The RNAP catalytic core consists of 2 alpha, 1 beta, 1 beta' and 1 omega subunit. When a sigma factor is associated with the core the holoenzyme is formed, which can initiate transcription.

It catalyses the reaction RNA(n) + a ribonucleoside 5'-triphosphate = RNA(n+1) + diphosphate. Functionally, DNA-dependent RNA polymerase catalyzes the transcription of DNA into RNA using the four ribonucleoside triphosphates as substrates. This Lactobacillus acidophilus (strain ATCC 700396 / NCK56 / N2 / NCFM) protein is DNA-directed RNA polymerase subunit beta.